A 91-amino-acid polypeptide reads, in one-letter code: Elongation factor 1-beta (91 aa).

It belongs to the EF-1-beta/EF-1-delta family.

Functionally, promotes the exchange of GDP for GTP in EF-1-alpha/GDP, thus allowing the regeneration of EF-1-alpha/GTP that could then be used to form the ternary complex EF-1-alpha/GTP/AAtRNA. The chain is Elongation factor 1-beta from Caldivirga maquilingensis (strain ATCC 700844 / DSM 13496 / JCM 10307 / IC-167).